Reading from the N-terminus, the 337-residue chain is Protein-methionine-sulfoxide reductase catalytic subunit MsrP (337 aa).

Positions Met1–Ala50 form a signal peptide, tat-type signal. Residues Asn94, Tyr97 to Glu98, Cys152, Thr187, Asn237, Arg242, and Ser253 to Lys255 contribute to the Mo-molybdopterin site.

This sequence belongs to the MsrP family. Heterodimer of a catalytic subunit (MsrP) and a heme-binding subunit (MsrQ). The cofactor is Mo-molybdopterin. Post-translationally, predicted to be exported by the Tat system. The position of the signal peptide cleavage has not been experimentally proven.

It is found in the periplasm. It catalyses the reaction L-methionyl-[protein] + a quinone + H2O = L-methionyl-(S)-S-oxide-[protein] + a quinol. It carries out the reaction L-methionyl-[protein] + a quinone + H2O = L-methionyl-(R)-S-oxide-[protein] + a quinol. In terms of biological role, part of the MsrPQ system that repairs oxidized periplasmic proteins containing methionine sulfoxide residues (Met-O), using respiratory chain electrons. Thus protects these proteins from oxidative-stress damage caused by reactive species of oxygen and chlorine generated by the host defense mechanisms. MsrPQ is essential for the maintenance of envelope integrity under bleach stress, rescuing a wide series of structurally unrelated periplasmic proteins from methionine oxidation. The catalytic subunit MsrP is non-stereospecific, being able to reduce both (R-) and (S-) diastereoisomers of methionine sulfoxide. This is Protein-methionine-sulfoxide reductase catalytic subunit MsrP from Pseudomonas syringae pv. tomato (strain ATCC BAA-871 / DC3000).